We begin with the raw amino-acid sequence, 1689 residues long: DNA-directed RNA polymerase I subunit rpa1 (1689 aa).

Cysteine 63, cysteine 66, cysteine 73, and histidine 76 together coordinate Zn(2+). A phosphoserine mark is found at serine 159 and serine 161. Positions 269–280 (VLRDTSKKHHED) are enriched in basic and acidic residues. A disordered region spans residues 269 to 295 (VLRDTSKKHHEDEGYDGDSDSSNESEV). The segment covering 281–295 (EGYDGDSDSSNESEV) has biased composition (acidic residues). Residues aspartate 643, aspartate 645, and aspartate 647 each contribute to the Mg(2+) site. Residues 1005–1017 (PQEYYFHCMAGRE) form a bridging helix region. The tract at residues 1346-1440 (RKSGGKDDTV…EEDEGFKSDE (95 aa)) is disordered. 2 positions are modified to phosphoserine: serine 1438 and serine 1441.

The protein belongs to the RNA polymerase beta' chain family. In terms of assembly, component of the RNA polymerase I (Pol I) complex consisting of at least 13 subunits.

The protein localises to the nucleus. Its subcellular location is the nucleolus. It catalyses the reaction RNA(n) + a ribonucleoside 5'-triphosphate = RNA(n+1) + diphosphate. In terms of biological role, DNA-dependent RNA polymerase catalyzes the transcription of DNA into RNA using the four ribonucleoside triphosphates as substrates. Largest and catalytic core component of RNA polymerase I which synthesizes ribosomal RNA precursors. Forms the polymerase active center together with the second largest subunit. A single stranded DNA template strand of the promoter is positioned within the central active site cleft of Pol I. A bridging helix emanates from RPA1 and crosses the cleft near the catalytic site and is thought to promote translocation of Pol I by acting as a ratchet that moves the RNA-DNA hybrid through the active site by switching from straight to bent conformations at each step of nucleotide addition. The chain is DNA-directed RNA polymerase I subunit rpa1 (rpa1) from Schizosaccharomyces pombe (strain 972 / ATCC 24843) (Fission yeast).